An 835-amino-acid chain; its full sequence is Microcephalin (835 aa).

A BRCT 1 domain is found at 1-93 (MAAPILKDVV…AHIDESLFPA (93 aa)). A phosphoserine mark is found at Ser279, Ser287, Ser296, and Ser333. 2 disordered regions span residues 313–381 (PDQK…RRSI) and 419–443 (DNLKERYSENLPPESQLPSSPAQLS). Thr335 is subject to Phosphothreonine. Over residues 343-361 (LLIHSRPRSSSVKRKRVSH) the composition is skewed to basic residues. The segment covering 434–443 (QLPSSPAQLS) has biased composition (polar residues). At Ser548 the chain carries Phosphoserine. The segment at 555–584 (AVGLKSTQNKGTTSKISNSSEGEAQSEHEP) is disordered. Over residues 559-577 (KSTQNKGTTSKISNSSEGE) the composition is skewed to polar residues. 2 consecutive BRCT domains span residues 640 to 730 (SGRG…PFEL) and 751 to 833 (YRGT…NYLL).

In terms of assembly, interacts with CDC27 and maybe other components of the APC/C complex. Interacts with histone variant H2AX under DNA damage conditions. Expressed in fetal brain, liver and kidney.

It localises to the cytoplasm. The protein resides in the cytoskeleton. It is found in the microtubule organizing center. Its subcellular location is the centrosome. Functionally, implicated in chromosome condensation and DNA damage induced cellular responses. May play a role in neurogenesis and regulation of the size of the cerebral cortex. In Homo sapiens (Human), this protein is Microcephalin.